A 379-amino-acid polypeptide reads, in one-letter code: MSTISATVAGPSIVQFVQIDSLVVMKIVKHVDSEMYAGLNEVAGEACQGLLTGLVSIDDRRLEITNCFPTARAEPMLDGDEIAQNNAFYEEQKQAEMLDMLRKFRDMNIDYELVGFYQAHPFGACFAQETIDSLIDYQASVPDGVVLIYDPVKTRQGQLSIRAYRLSTKALEMSLDGDWSPESTRTAGLTYENMLEELPVVIKNSHLVNVMLAELALEGDCAIQRSSSHLELGTRRSLEKCLRSLMSDVDDLNRTVMAYTKYVADKQRYDLTVYNAMQKRQAENEQREARGEPPLSFDDIKKMKPPQLTTKCGMLESFLCSSDARAHSDYAAEACLRHFSFSSFCLCFFNENIAKLFLAEAVVDSHGSRDHGGAAASVR.

In terms of domain architecture, MPN spans 17 to 170; it reads VQIDSLVVMK…IRAYRLSTKA (154 aa). Residues 280-291 are compositionally biased toward basic and acidic residues; that stretch reads RQAENEQREARG. Residues 280 to 300 are disordered; sequence RQAENEQREARGEPPLSFDDI.

The protein belongs to the eIF-3 subunit H family. Component of the eukaryotic translation initiation factor 3 (eIF-3) complex.

Its subcellular location is the cytoplasm. Its function is as follows. Component of the eukaryotic translation initiation factor 3 (eIF-3) complex, which is involved in protein synthesis of a specialized repertoire of mRNAs and, together with other initiation factors, stimulates binding of mRNA and methionyl-tRNAi to the 40S ribosome. The eIF-3 complex specifically targets and initiates translation of a subset of mRNAs involved in cell proliferation. This chain is Eukaryotic translation initiation factor 3 subunit H, found in Brugia malayi (Filarial nematode worm).